The chain runs to 831 residues: uncharacterized protein (831 aa).

In terms of domain architecture, CID spans 1–146; sequence MDIFDSTITS…RAFSILSGVA (146 aa). Disordered regions lie at residues 205 to 233, 265 to 354, 434 to 480, and 572 to 831; these read SSSSSSSSSSSSSSTTTTTTTTSELSSIS, KEHF…NYNN, IGNS…NEDS, and CGAD…SNRH. 2 stretches are compositionally biased toward low complexity: residues 272 to 354 and 434 to 477; these read NDTS…NYNN and IGNS…NNNN. Composition is skewed to basic and acidic residues over residues 592-601 and 611-813; these read NENKQNDSHR and SRGE…RSKE. Low complexity predominate over residues 817–831; sequence NNDNRSSSNRSSNRH.

This is an uncharacterized protein from Dictyostelium discoideum (Social amoeba).